Reading from the N-terminus, the 464-residue chain is Argininosuccinate lyase (464 aa).

The protein belongs to the lyase 1 family. Argininosuccinate lyase subfamily.

Its subcellular location is the cytoplasm. It catalyses the reaction 2-(N(omega)-L-arginino)succinate = fumarate + L-arginine. The protein operates within amino-acid biosynthesis; L-arginine biosynthesis; L-arginine from L-ornithine and carbamoyl phosphate: step 3/3. This chain is Argininosuccinate lyase, found in Pseudomonas putida (strain GB-1).